A 550-amino-acid chain; its full sequence is Mitochondrial distribution and morphology protein 34 (550 aa).

Positions 1 to 208 (MAFNFNWSPL…CPEQMSKEDH (208 aa)) constitute an SMP-LTD domain. Disordered stretches follow at residues 294–313 (VDKPEASSTTPLTTPSLVKS), 358–505 (RNAK…ILEQ), and 519–550 (VYDEKQRNPSFWDEREDSPPPAYEAQPTTAAS). A compositionally biased stretch (low complexity) spans 300–310 (SSTTPLTTPSL). Residues 364–376 (ANRKKKTRVVNLR) show a composition bias toward basic residues. Polar residues-rich tracts occupy residues 391-407 (MSDSASVQASESITMSD) and 458-467 (AEISQPQVAR). Over residues 481–495 (SENDKRSDSKRRGPR) the composition is skewed to basic and acidic residues.

The protein belongs to the MDM34 family. Component of the ER-mitochondria encounter structure (ERMES) or MDM complex, composed of MMM1, MDM10, MDM12 and MDM34.

It localises to the mitochondrion outer membrane. Its function is as follows. Component of the ERMES/MDM complex, which serves as a molecular tether to connect the endoplasmic reticulum (ER) and mitochondria. Components of this complex are involved in the control of mitochondrial shape and protein biogenesis, and function in nonvesicular lipid trafficking between the ER and mitochondria. MDM34 is required for the interaction of the ER-resident membrane protein MMM1 and the outer mitochondrial membrane-resident beta-barrel protein MDM10. The chain is Mitochondrial distribution and morphology protein 34 from Pyricularia oryzae (strain 70-15 / ATCC MYA-4617 / FGSC 8958) (Rice blast fungus).